Reading from the N-terminus, the 143-residue chain is Regulator of ribonuclease activity B (143 aa).

Residues 117–135 (DPDAEYDDEDGENEDDESE) are compositionally biased toward acidic residues. Positions 117–143 (DPDAEYDDEDGENEDDESESDKSSRLH) are disordered.

This sequence belongs to the RraB family. In terms of assembly, interacts with the C-terminal region of Rne.

It localises to the cytoplasm. Functionally, globally modulates RNA abundance by binding to RNase E (Rne) and regulating its endonucleolytic activity. Can modulate Rne action in a substrate-dependent manner by altering the composition of the degradosome. This chain is Regulator of ribonuclease activity B, found in Proteus mirabilis (strain HI4320).